We begin with the raw amino-acid sequence, 272 residues long: 2-succinyl-6-hydroxy-2,4-cyclohexadiene-1-carboxylate synthase (272 aa).

It belongs to the AB hydrolase superfamily. MenH family. Monomer.

It carries out the reaction 5-enolpyruvoyl-6-hydroxy-2-succinyl-cyclohex-3-ene-1-carboxylate = (1R,6R)-6-hydroxy-2-succinyl-cyclohexa-2,4-diene-1-carboxylate + pyruvate. The protein operates within quinol/quinone metabolism; 1,4-dihydroxy-2-naphthoate biosynthesis; 1,4-dihydroxy-2-naphthoate from chorismate: step 3/7. It participates in quinol/quinone metabolism; menaquinone biosynthesis. In terms of biological role, catalyzes a proton abstraction reaction that results in 2,5-elimination of pyruvate from 2-succinyl-5-enolpyruvyl-6-hydroxy-3-cyclohexene-1-carboxylate (SEPHCHC) and the formation of 2-succinyl-6-hydroxy-2,4-cyclohexadiene-1-carboxylate (SHCHC). The protein is 2-succinyl-6-hydroxy-2,4-cyclohexadiene-1-carboxylate synthase of Yersinia pseudotuberculosis serotype I (strain IP32953).